We begin with the raw amino-acid sequence, 294 residues long: Filamin-B (294 aa).

Filamin repeat units follow at residues 1–67 and 71–163; these read GTRL…KVRV and GQAG…KAKV. Phosphoserine occurs at positions 61 and 157. Residue lysine 160 forms a Glycyl lysine isopeptide (Lys-Gly) (interchain with G-Cter in ISG15) linkage. The interval 164 to 198 is hinge 2; that stretch reads TGQRLVGPGSTNETSSILVESVTRSSTETCYSAIP. Residues 164-294 are self-association site, tail; it reads TGQRLVGPGS…PGSPFHVTVP (131 aa). A phosphoserine mark is found at serine 173 and serine 184. Residues 199-293 form a Filamin 24 repeat; sequence KASSDASKVT…IPGSPFHVTV (95 aa). An N6-succinyllysine mark is found at lysine 210 and lysine 216. An N6-acetyllysine modification is found at lysine 268.

The protein belongs to the filamin family. In terms of assembly, homodimer. Interacts with FLNA, FLNC, INPPL1, ITGB1A, ITGB1D, ITGB3, ITGB6, MYOT, MYOZ1, PSEN1 and PSEN2. Interacts with MICALL2. Interacts with RFLNA and RFLNB. Interacts with HTLV-I viral p13 protein. Interacts with ASB2; the interaction targets FLNB for proteasomal degradation. ISGylation prevents ability to interact with the upstream activators of the JNK cascade and inhibits IFNA-induced JNK signaling. In terms of processing, ubiquitination by a SCF-like complex containing ASB2 leads to proteasomal degradation which promotes muscle differentiation.

It is found in the cytoplasm. The protein localises to the cell cortex. Its subcellular location is the cytoskeleton. It localises to the myofibril. The protein resides in the sarcomere. It is found in the z line. Its function is as follows. Connects cell membrane constituents to the actin cytoskeleton. May promote orthogonal branching of actin filaments and links actin filaments to membrane glycoproteins. Anchors various transmembrane proteins to the actin cytoskeleton. In Oryctolagus cuniculus (Rabbit), this protein is Filamin-B (FLNB).